The following is a 175-amino-acid chain: Hypoxanthine-guanine phosphoribosyltransferase (175 aa).

Diphosphate-binding residues include Lys-40 and Gly-41. Mg(2+) is bound by residues Glu-96 and Asp-97. Asp-100 (proton acceptor) is an active-site residue. Residues Lys-128, 149–150, and Asp-156 each bind GMP; that span reads FL. Arg-162 is a diphosphate binding site.

This sequence belongs to the purine/pyrimidine phosphoribosyltransferase family. Mg(2+) serves as cofactor.

The protein resides in the cytoplasm. The enzyme catalyses IMP + diphosphate = hypoxanthine + 5-phospho-alpha-D-ribose 1-diphosphate. The catalysed reaction is GMP + diphosphate = guanine + 5-phospho-alpha-D-ribose 1-diphosphate. Its pathway is purine metabolism; IMP biosynthesis via salvage pathway; IMP from hypoxanthine: step 1/1. It functions in the pathway purine metabolism; GMP biosynthesis via salvage pathway; GMP from guanine: step 1/1. Its function is as follows. Purine salvage pathway enzyme that catalyzes the transfer of the ribosyl-5-phosphate group from 5-phospho-alpha-D-ribose 1-diphosphate (PRPP) to the N9 position of the 6-oxopurines hypoxanthine and guanine to form the corresponding ribonucleotides IMP (inosine 5'-monophosphate) and GMP (guanosine 5'-monophosphate), with the release of PPi. The protein is Hypoxanthine-guanine phosphoribosyltransferase (hpt) of Mycoplasma pneumoniae (strain ATCC 29342 / M129 / Subtype 1) (Mycoplasmoides pneumoniae).